Consider the following 844-residue polypeptide: Patched-related protein 9 (844 aa).

In terms of domain architecture, SSD spans 264-421 (LIPWMPWTSL…VTFFNAVMSL (158 aa)).

Belongs to the patched family.

The chain is Patched-related protein 9 (ptr-9) from Caenorhabditis elegans.